Reading from the N-terminus, the 525-residue chain is Cytochrome P450 714A2 (525 aa).

The Lumenal portion of the chain corresponds to 1–3 (MES). The helical; Signal-anchor for type III membrane protein transmembrane segment at 4–24 (LVVHTVNAIWCIVIVGIFSVG) threads the bilayer. Residues 25–525 (YHVYGRAVVE…PQHGVVIRVV (501 aa)) are Cytoplasmic-facing. Residue C475 coordinates heme.

This sequence belongs to the cytochrome P450 family. The cofactor is heme. As to expression, expressed in the shoot apical meristem (SAM) and petioles of young leaves, in the leaf margin and petiole vein of cotyledons, and at low levels in the filaments of developing flowers. Not detected in siliques.

The protein localises to the endoplasmic reticulum membrane. Involved in the inactivation of early gibberellin (GA) intermediates. This Arabidopsis thaliana (Mouse-ear cress) protein is Cytochrome P450 714A2 (CYP714A2).